Consider the following 493-residue polypeptide: Desmethylyatein synthase (493 aa).

The chain crosses the membrane as a helical span at residues 1-21 (METFQCLTLFLLFISTVFILK). A heme-binding site is contributed by cysteine 434.

Belongs to the cytochrome P450 family. Requires heme as cofactor.

It is found in the membrane. It carries out the reaction (-)-bursehernin + reduced [NADPH--hemoprotein reductase] + O2 = (-)-5'-demethylyatein + oxidized [NADPH--hemoprotein reductase] + H2O + H(+). The protein operates within aromatic compound metabolism; phenylpropanoid biosynthesis. Functionally, cytochrome P450 involved in the biosynthesis of etoposide, a chemotherapeutic compound of the topoisomerase inhibitor family. Catalyzes the conversion of bursehernin to demethylyatein. In Sinopodophyllum hexandrum (Himalayan may apple), this protein is Desmethylyatein synthase.